A 334-amino-acid chain; its full sequence is Aspartate carbamoyltransferase catalytic subunit (334 aa).

Residues R71 and T72 each contribute to the carbamoyl phosphate site. K99 contacts L-aspartate. Carbamoyl phosphate is bound by residues R121, H151, and Q154. R184 and R239 together coordinate L-aspartate. G280 and P281 together coordinate carbamoyl phosphate.

Belongs to the aspartate/ornithine carbamoyltransferase superfamily. ATCase family. As to quaternary structure, heterododecamer (2C3:3R2) of six catalytic PyrB chains organized as two trimers (C3), and six regulatory PyrI chains organized as three dimers (R2).

The catalysed reaction is carbamoyl phosphate + L-aspartate = N-carbamoyl-L-aspartate + phosphate + H(+). Its pathway is pyrimidine metabolism; UMP biosynthesis via de novo pathway; (S)-dihydroorotate from bicarbonate: step 2/3. Catalyzes the condensation of carbamoyl phosphate and aspartate to form carbamoyl aspartate and inorganic phosphate, the committed step in the de novo pyrimidine nucleotide biosynthesis pathway. The chain is Aspartate carbamoyltransferase catalytic subunit from Pseudomonas fluorescens (strain SBW25).